A 460-amino-acid polypeptide reads, in one-letter code: RING finger protein DG17 (460 aa).

An RING-type zinc finger spans residues 27–67 (CPICFEFIYKKQIYQCKSGHHACKECWEKSLETKKECMTCK). 2 consecutive TRAF-type zinc fingers follow at residues 141–194 (SHLI…KKEL) and 196–253 (THYK…SELQ). The stretch at 269 to 294 (IEKLTNQVGQSKKTHDELLKKIEDLS) forms a coiled coil. Residues 320–448 (GYRNKWIISN…DDKLIIEIYI (129 aa)) form the MATH domain.

It belongs to the TNF receptor-associated factor family. A subfamily.

The protein localises to the cytoplasm. Probable adapter protein and signal transducer that links members of the tumor necrosis factor receptor family to different signaling pathways by association with the receptor cytoplasmic domain and kinases. The chain is RING finger protein DG17 (zfaA) from Dictyostelium discoideum (Social amoeba).